The following is a 120-amino-acid chain: NADH dehydrogenase [ubiquinone] 1 subunit C2 (120 aa).

Met-1 is modified (N-acetylmethionine). The chain crosses the membrane as a helical span at residues 57 to 76 (GLHRQLLYITSFVFVGYYLL).

It belongs to the complex I NDUFC2 subunit family. Complex I is composed of 45 different subunits. Interacts with TMEM242. In terms of processing, there is a minor unacetylated form of subunit B14.5b.

Its subcellular location is the mitochondrion inner membrane. Functionally, accessory subunit of the mitochondrial membrane respiratory chain NADH dehydrogenase (Complex I), that is believed not to be involved in catalysis but required for the complex assembly. Complex I functions in the transfer of electrons from NADH to the respiratory chain. The immediate electron acceptor for the enzyme is believed to be ubiquinone. This chain is NADH dehydrogenase [ubiquinone] 1 subunit C2, found in Bos taurus (Bovine).